The primary structure comprises 330 residues: Aspartate--ammonia ligase (330 aa).

Belongs to the class-II aminoacyl-tRNA synthetase family. AsnA subfamily. In terms of assembly, homodimer.

It is found in the cytoplasm. It carries out the reaction L-aspartate + NH4(+) + ATP = L-asparagine + AMP + diphosphate + H(+). It participates in amino-acid biosynthesis; L-asparagine biosynthesis; L-asparagine from L-aspartate (ammonia route): step 1/1. The sequence is that of Aspartate--ammonia ligase from Salmonella typhimurium (strain LT2 / SGSC1412 / ATCC 700720).